A 366-amino-acid chain; its full sequence is Chorismate synthase (366 aa).

Residues Arg-48 and Arg-54 each coordinate NADP(+). FMN is bound by residues 125–127, 238–239, Gly-278, 293–297, and Arg-319; these read RSS, NA, and KPTSS.

It belongs to the chorismate synthase family. Homotetramer. Requires FMNH2 as cofactor.

It catalyses the reaction 5-O-(1-carboxyvinyl)-3-phosphoshikimate = chorismate + phosphate. It functions in the pathway metabolic intermediate biosynthesis; chorismate biosynthesis; chorismate from D-erythrose 4-phosphate and phosphoenolpyruvate: step 7/7. In terms of biological role, catalyzes the anti-1,4-elimination of the C-3 phosphate and the C-6 proR hydrogen from 5-enolpyruvylshikimate-3-phosphate (EPSP) to yield chorismate, which is the branch point compound that serves as the starting substrate for the three terminal pathways of aromatic amino acid biosynthesis. This reaction introduces a second double bond into the aromatic ring system. The protein is Chorismate synthase of Laribacter hongkongensis (strain HLHK9).